The following is a 197-amino-acid chain: CASP-like protein 1B2 (197 aa).

Ala2 carries the N-acetylalanine modification. The Cytoplasmic segment spans residues Ala2 to Lys17. The helical transmembrane segment at Leu18–Ser38 threads the bilayer. Topologically, residues Leu39–Ala69 are extracellular. The helical transmembrane segment at Phe70–Leu90 threads the bilayer. Residues Gln91–Ser106 are Cytoplasmic-facing. A helical membrane pass occupies residues Ile107 to Phe127. Residues Val128–Ala156 lie on the Extracellular side of the membrane. A helical membrane pass occupies residues Gly157–Ile177. Over Ser178–Val197 the chain is Cytoplasmic.

It belongs to the Casparian strip membrane proteins (CASP) family. In terms of assembly, homodimer and heterodimers.

It localises to the cell membrane. The sequence is that of CASP-like protein 1B2 from Arabidopsis lyrata subsp. lyrata (Lyre-leaved rock-cress).